A 400-amino-acid chain; its full sequence is Argininosuccinate synthase (400 aa).

Residues 11-19 (AYSGGLDTS) and Ala38 each bind ATP. L-citrulline is bound by residues Tyr89 and Ser94. Gly119 provides a ligand contact to ATP. L-aspartate is bound by residues Thr121, Asn125, and Asp126. Asn125 is an L-citrulline binding site. L-citrulline-binding residues include Arg129, Ser179, Ser188, Glu264, and Tyr276.

Belongs to the argininosuccinate synthase family. Type 1 subfamily. Homotetramer.

The protein resides in the cytoplasm. It catalyses the reaction L-citrulline + L-aspartate + ATP = 2-(N(omega)-L-arginino)succinate + AMP + diphosphate + H(+). Its pathway is amino-acid biosynthesis; L-arginine biosynthesis; L-arginine from L-ornithine and carbamoyl phosphate: step 2/3. This is Argininosuccinate synthase from Oleidesulfovibrio alaskensis (strain ATCC BAA-1058 / DSM 17464 / G20) (Desulfovibrio alaskensis).